A 248-amino-acid polypeptide reads, in one-letter code: Small ribosomal subunit protein uS3 (248 aa).

The KH type-2 domain maps to isoleucine 38–lysine 106. Positions serine 214–alanine 230 are enriched in basic and acidic residues. Residues serine 214–glycine 248 are disordered.

The protein belongs to the universal ribosomal protein uS3 family. In terms of assembly, part of the 30S ribosomal subunit. Forms a tight complex with proteins S10 and S14.

Binds the lower part of the 30S subunit head. Binds mRNA in the 70S ribosome, positioning it for translation. The sequence is that of Small ribosomal subunit protein uS3 from Corynebacterium glutamicum (strain R).